The sequence spans 350 residues: MIYPLLLSALPLLSSAALTYRGADISSLLIEEDAGISYKNLNGETQALEDILVNNGVNSIRQRVWVDPSDGSYDLDYNLKLAKRVQAAGMSIYLDLHLSDTWADPSDQTTPTGWSTTDIDTLTWQLYNYTLDVCNTFAENDIDIEIVSIGNEISSGLLWPLGKTSNYDNIAKLLHSGAWGVKDSNQATTPKIMIHLDNGWDWEEQEYFYKTVLATGSLLSTDFDLMGVSYYPFYNSEATLSALQTSLTNMQSNYDKSVVVVETNWPVSCPDPEYSFPSDLSSIPFSAAGQEEFLEKLAEVVEGVTDGLGIYYWEPAWVDNAALGSSCADNLMVDIDTDEVLESVTVFEDL.

The signal sequence occupies residues 1 to 16 (MIYPLLLSALPLLSSA). A glycan (N-linked (GlcNAc...) asparagine) is linked at N128. E152 (proton donor) is an active-site residue. The active-site Nucleophile is E262.

Belongs to the glycosyl hydrolase 53 family.

Its subcellular location is the secreted. It catalyses the reaction The enzyme specifically hydrolyzes (1-&gt;4)-beta-D-galactosidic linkages in type I arabinogalactans.. Its function is as follows. Endogalactanase involved in the degradation of plant cell wall polysaccharides, and more particularly of hairy regions of pectin. The sequence is that of Arabinogalactan endo-beta-1,4-galactanase A (galA) from Aspergillus niger.